Here is a 129-residue protein sequence, read N- to C-terminus: Small ribosomal subunit protein uS11 (129 aa).

The protein belongs to the universal ribosomal protein uS11 family. In terms of assembly, part of the 30S ribosomal subunit. Interacts with proteins S7 and S18. Binds to IF-3.

Located on the platform of the 30S subunit, it bridges several disparate RNA helices of the 16S rRNA. Forms part of the Shine-Dalgarno cleft in the 70S ribosome. This is Small ribosomal subunit protein uS11 from Mannheimia succiniciproducens (strain KCTC 0769BP / MBEL55E).